A 431-amino-acid chain; its full sequence is Adenylosuccinate synthetase (431 aa).

GTP-binding positions include 12 to 18 (GDEGKGK) and 40 to 42 (GHT). Asp13 acts as the Proton acceptor in catalysis. Mg(2+) is bound by residues Asp13 and Gly40. IMP contacts are provided by residues 13 to 16 (DEGK), 38 to 41 (NAGH), Thr130, Arg144, Gln225, Thr240, and Arg304. Residue His41 is the Proton donor of the active site. Position 300-306 (300-306 (ATTGRPR)) interacts with substrate. Residues Arg306, 332–334 (KLD), and 414–416 (SVG) contribute to the GTP site.

Belongs to the adenylosuccinate synthetase family. In terms of assembly, homodimer. It depends on Mg(2+) as a cofactor.

It localises to the cytoplasm. It catalyses the reaction IMP + L-aspartate + GTP = N(6)-(1,2-dicarboxyethyl)-AMP + GDP + phosphate + 2 H(+). It functions in the pathway purine metabolism; AMP biosynthesis via de novo pathway; AMP from IMP: step 1/2. In terms of biological role, plays an important role in the de novo pathway of purine nucleotide biosynthesis. Catalyzes the first committed step in the biosynthesis of AMP from IMP. This is Adenylosuccinate synthetase from Geotalea uraniireducens (strain Rf4) (Geobacter uraniireducens).